A 203-amino-acid polypeptide reads, in one-letter code: Outer-membrane lipoprotein carrier protein (203 aa).

The signal sequence occupies residues 1 to 21; that stretch reads MKKLLVACCLLSGLISAHALA.

This sequence belongs to the LolA family. Monomer.

Its subcellular location is the periplasm. Participates in the translocation of lipoproteins from the inner membrane to the outer membrane. Only forms a complex with a lipoprotein if the residue after the N-terminal Cys is not an aspartate (The Asp acts as a targeting signal to indicate that the lipoprotein should stay in the inner membrane). This Yersinia enterocolitica serotype O:8 / biotype 1B (strain NCTC 13174 / 8081) protein is Outer-membrane lipoprotein carrier protein.